The chain runs to 714 residues: Fatty acid oxidation complex subunit alpha (714 aa).

The interval 1–190 (MEMASVFTLN…KLGLVDDVVP (190 aa)) is enoyl-CoA hydratase. A 3-hydroxyacyl-CoA dehydrogenase region spans residues 306 to 714 (APLNSVGILG…FWKTTATDLQ (409 aa)).

The protein in the N-terminal section; belongs to the enoyl-CoA hydratase/isomerase family. This sequence in the central section; belongs to the 3-hydroxyacyl-CoA dehydrogenase family. Heterotetramer of two alpha chains (FadJ) and two beta chains (FadI).

It is found in the cytoplasm. The catalysed reaction is a (3S)-3-hydroxyacyl-CoA = a (2E)-enoyl-CoA + H2O. The enzyme catalyses a 4-saturated-(3S)-3-hydroxyacyl-CoA = a (3E)-enoyl-CoA + H2O. It catalyses the reaction a (3S)-3-hydroxyacyl-CoA + NAD(+) = a 3-oxoacyl-CoA + NADH + H(+). It carries out the reaction (3S)-3-hydroxybutanoyl-CoA = (3R)-3-hydroxybutanoyl-CoA. It functions in the pathway lipid metabolism; fatty acid beta-oxidation. Functionally, catalyzes the formation of a hydroxyacyl-CoA by addition of water on enoyl-CoA. Also exhibits 3-hydroxyacyl-CoA epimerase and 3-hydroxyacyl-CoA dehydrogenase activities. The sequence is that of Fatty acid oxidation complex subunit alpha from Escherichia coli O139:H28 (strain E24377A / ETEC).